The following is a 320-amino-acid chain: Fe-S cluster assembly protein dre2 (320 aa).

An N-terminal SAM-like domain region spans residues Met1–Val130. Residues Pro131–Ser213 are linker. The disordered stretch occupies residues Leu141–Ala166. Residues Cys222, Cys233, Cys236, and Cys238 each coordinate [2Fe-2S] cluster. The segment at Cys222–Cys238 is fe-S binding site A. [4Fe-4S] cluster contacts are provided by Cys283, Cys286, Cys294, and Cys297. 2 short sequence motifs (cx2C motif) span residues Cys283–Cys286 and Cys294–Cys297. The segment at Cys283–Cys297 is fe-S binding site B.

Belongs to the anamorsin family. As to quaternary structure, monomer. Interacts with tah18. Interacts with mia40. It depends on [2Fe-2S] cluster as a cofactor. The cofactor is [4Fe-4S] cluster.

It is found in the cytoplasm. The protein localises to the mitochondrion intermembrane space. Its function is as follows. Component of the cytosolic iron-sulfur (Fe-S) protein assembly (CIA) machinery required for the maturation of extramitochondrial Fe-S proteins. Part of an electron transfer chain functioning in an early step of cytosolic Fe-S biogenesis, facilitating the de novo assembly of a [4Fe-4S] cluster on the scaffold complex cfd1-nbp35. Electrons are transferred to dre2 from NADPH via the FAD- and FMN-containing protein tah18. Tah18-dre2 are also required for the assembly of the diferric tyrosyl radical cofactor of ribonucleotide reductase (RNR), probably by providing electrons for reduction during radical cofactor maturation in the catalytic small subunit rnr2. The sequence is that of Fe-S cluster assembly protein dre2 from Neosartorya fischeri (strain ATCC 1020 / DSM 3700 / CBS 544.65 / FGSC A1164 / JCM 1740 / NRRL 181 / WB 181) (Aspergillus fischerianus).